The chain runs to 240 residues: Nicotinamide riboside kinase (240 aa).

13–21 (GCSSSGKTT) contributes to the ATP binding site. Positions 20 and 39 each coordinate Mg(2+). The active-site Proton acceptor is Asp-39. Residues 39–42 (DDFY) and 59–60 (WD) each bind substrate. Residue Arg-158 participates in ATP binding. Substrate is bound by residues Arg-159 and 164–165 (GY). ATP-binding positions include 162-164 (RKG) and 208-210 (KSK).

This sequence belongs to the uridine kinase family. NRK subfamily.

It carries out the reaction beta-nicotinamide D-riboside + ATP = beta-nicotinamide D-ribonucleotide + ADP + H(+). The catalysed reaction is beta-D-ribosylnicotinate + ATP = nicotinate beta-D-ribonucleotide + ADP + H(+). It participates in cofactor biosynthesis; NAD(+) biosynthesis. In terms of biological role, catalyzes the phosphorylation of nicotinamide riboside (NR) and nicotinic acid riboside (NaR) to form nicotinamide mononucleotide (NMN) and nicotinic acid mononucleotide (NaMN). This chain is Nicotinamide riboside kinase (NRK1), found in Saccharomyces cerevisiae (strain ATCC 204508 / S288c) (Baker's yeast).